The following is a 309-amino-acid chain: Transcription initiation factor IIB 1 (309 aa).

Tandem repeats lie at residues Asn125–Leu208 and Asp219–Gln300.

This sequence belongs to the TFIIB family.

Stabilizes TBP binding to an archaeal box-A promoter. Also responsible for recruiting RNA polymerase II to the pre-initiation complex (DNA-TBP-TFIIB). The sequence is that of Transcription initiation factor IIB 1 from Saccharolobus solfataricus (strain ATCC 35092 / DSM 1617 / JCM 11322 / P2) (Sulfolobus solfataricus).